A 230-amino-acid chain; its full sequence is Probable methylthioribulose-1-phosphate dehydratase (230 aa).

Cys87 contacts substrate. Positions 105 and 107 each coordinate Zn(2+). Catalysis depends on Glu129, which acts as the Proton donor/acceptor. His185 lines the Zn(2+) pocket.

Belongs to the aldolase class II family. MtnB subfamily. Requires Zn(2+) as cofactor.

The protein localises to the cytoplasm. It carries out the reaction 5-(methylsulfanyl)-D-ribulose 1-phosphate = 5-methylsulfanyl-2,3-dioxopentyl phosphate + H2O. Its pathway is amino-acid biosynthesis; L-methionine biosynthesis via salvage pathway; L-methionine from S-methyl-5-thio-alpha-D-ribose 1-phosphate: step 2/6. Catalyzes the dehydration of methylthioribulose-1-phosphate (MTRu-1-P) into 2,3-diketo-5-methylthiopentyl-1-phosphate (DK-MTP-1-P). The sequence is that of Probable methylthioribulose-1-phosphate dehydratase from Drosophila pseudoobscura pseudoobscura (Fruit fly).